Consider the following 548-residue polypeptide: Natural resistance-associated macrophage protein 1 (548 aa).

Residues 1 to 38 (MPGDMGPPKQGGTRYGSISSPPSPGPQQAPPGGTYLSE) are disordered. The Cytoplasmic segment spans residues 1 to 55 (MPGDMGPPKQGGTRYGSISSPPSPGPQQAPPGGTYLSEKIPIPDTESGAFSLRKL). A helical membrane pass occupies residues 56–73 (WAFTGPGFLMSIAFLDPG). At 74–82 (NIESDLQAG) the chain is on the extracellular side. A helical membrane pass occupies residues 83–102 (AVAGFKLLWVLLWATVLGLL). Residues 103 to 139 (CQRLAARLGVVTGKDLGEVCHLYYPKVPRILLWLTIE) are Cytoplasmic-facing. A helical membrane pass occupies residues 140 to 160 (LAIVGSDMQEVIGTAIAFSLL). The Extracellular segment spans residues 161-164 (SAGR). A helical membrane pass occupies residues 165–184 (IPLWGGVLITIVDTFFFLFL). Over 185 to 193 (DNYGLRKLE) the chain is Cytoplasmic. The helical transmembrane segment at 194-214 (AFFGFLITIMALTFGYEYVVA) threads the bilayer. Residues 215–237 (RPAQGALLQGLFLPSCAGCGQPE) are Extracellular-facing. Residues 238–256 (LLQAVGIVGAIIMPHNIYL) form a helical membrane-spanning segment. The Cytoplasmic portion of the chain corresponds to 257–284 (HSSLVKSREVDRSRRADIREANMYFLIE). The helical transmembrane segment at 285–304 (ATIALSVSFLINLFVMAVFG) threads the bilayer. Topologically, residues 305–346 (QAFYKQTNQAAFNICANSSLHDYATIFPRNNLTVAVDIYQGG) are extracellular. Asn-321 and Asn-335 each carry an N-linked (GlcNAc...) asparagine glycan. The helical transmembrane segment at 347 to 366 (VILGCLFGPAALYIWAVGLL) threads the bilayer. The Cytoplasmic portion of the chain corresponds to 367–397 (AAGQSSTMTGTYAGQFVMEGFLKLRWSRFAR). A helical transmembrane segment spans residues 398 to 415 (VLLTRSCAILPTVLVAVF). The Extracellular segment spans residues 416-426 (RDLRDLSGLND). A helical membrane pass occupies residues 427 to 447 (LLNVLQSLLLPFAVLPILTFT). The Cytoplasmic portion of the chain corresponds to 448–463 (SMPAVMQEFANGLVSK). Residues 464 to 485 (VISSSIMVLVCAVNLYFVISYV) form a helical membrane-spanning segment. At 486–493 (PSLPHPDY) the chain is on the extracellular side. Residues 494–513 (FSLVALLAAAYLGLTTYLVW) form a helical membrane-spanning segment. Residues 514-548 (TCLITQGATLLAHSSHQRFLYGLPEEDQENGRTSG) are Cytoplasmic-facing.

This sequence belongs to the NRAMP family.

Its subcellular location is the late endosome membrane. The protein localises to the lysosome membrane. It catalyses the reaction Zn(2+)(in) + H(+)(out) = Zn(2+)(out) + H(+)(in). The enzyme catalyses Fe(2+)(in) + H(+)(out) = Fe(2+)(out) + H(+)(in). It carries out the reaction Mn(2+)(in) + H(+)(out) = Mn(2+)(out) + H(+)(in). Functionally, macrophage-specific antiporter that fluxes metal ions in either direction against a proton gradient. Localized to late endosomal lysosomal membranes, delivers bivalent cations from the cytosol into these acidic compartments where they may directly affect antimicrobial activity. Involved in iron metabolism and host natural resistance to infection with intracellular parasites. Pathogen resistance involves sequestration of Fe(2+) and Mn(2+), cofactors of both prokaryotic and eukaryotic catalases and superoxide dismutases, not only to protect the macrophage against its own generation of reactive oxygen species, but to deny the cations to the pathogen for synthesis of its protective enzymes. The chain is Natural resistance-associated macrophage protein 1 (SLC11A1) from Cervus elaphus (Red deer).